Here is a 676-residue protein sequence, read N- to C-terminus: Capsid vertex component 1 (676 aa).

The segment covering 253–264 (HPVRPSSSRVAS) has biased composition (low complexity). A disordered region spans residues 253–308 (HPVRPSSSRVASGLLQSAKGHGAQTSNTDPINNGSFDGVLEPPGQGRFTGKKNNSS). The segment covering 275 to 287 (AQTSNTDPINNGS) has biased composition (polar residues).

This sequence belongs to the herpesviridae CVC1 protein family. As to quaternary structure, interacts (via C-terminus) with capsid vertex component 2/CVC2.

Its subcellular location is the virion. It localises to the host nucleus. In terms of biological role, capsid vertex-specific component that plays a role during viral DNA encapsidation, assuring correct genome cleavage and presumably stabilizing capsids that contain full-length viral genomes. This chain is Capsid vertex component 1, found in Varicella-zoster virus (strain Dumas) (HHV-3).